The following is a 91-amino-acid chain: Probable Thioredoxin (91 aa).

The region spanning 1–91 is the Glutaredoxin domain; sequence MVMMKLFTSP…LKGGEEYGAS (91 aa). A disulfide bridge connects residues Cys-12 and Cys-15.

The protein belongs to the glutaredoxin family.

It is found in the cytoplasm. Acts to maintain redox homeostasis; functions as a protein disulfide reductase. This Archaeoglobus fulgidus (strain ATCC 49558 / DSM 4304 / JCM 9628 / NBRC 100126 / VC-16) protein is Probable Thioredoxin.